We begin with the raw amino-acid sequence, 336 residues long: MNAPEILNGAATASPADATEATQTAARAKTPLTRREQKEAYENNKLFKRLARQVGEAIVDFNMIENGDKVMVCLSGGKDSYAMLEILMRLRERAPINFDIVAVNLDQKQPGFPEHVLPEYLKQLDIPFHIENQDTYSIVKRLVPEGKTTCSLCSRLRRGILYRVAGELGATKIALGHHRDDILQTLLLNMFYGGKLKGMPPKLQSDDGKNIVIRPLAYVKETDLEKYAELREFPIIPCNLCGSQPNLKRAEMKALVRDWEKRFPGRIENMFNALSNVVPSHLMDHKLFPFAGLRATGEADPQGDIAFDEEPCSTDAAEGAMPGATKSISIVQFDDL.

The interval 1 to 34 (MNAPEILNGAATASPADATEATQTAARAKTPLTR) is disordered. Positions 10 to 22 (AATASPADATEAT) are enriched in low complexity. The PP-loop motif signature appears at 75 to 80 (SGGKDS). Cys150, Cys153, and Cys241 together coordinate [4Fe-4S] cluster.

The protein belongs to the TtcA family. In terms of assembly, homodimer. Mg(2+) is required as a cofactor. It depends on [4Fe-4S] cluster as a cofactor.

It is found in the cytoplasm. The enzyme catalyses cytidine(32) in tRNA + S-sulfanyl-L-cysteinyl-[cysteine desulfurase] + AH2 + ATP = 2-thiocytidine(32) in tRNA + L-cysteinyl-[cysteine desulfurase] + A + AMP + diphosphate + H(+). It functions in the pathway tRNA modification. Catalyzes the ATP-dependent 2-thiolation of cytidine in position 32 of tRNA, to form 2-thiocytidine (s(2)C32). The sulfur atoms are provided by the cysteine/cysteine desulfurase (IscS) system. In Paraburkholderia phytofirmans (strain DSM 17436 / LMG 22146 / PsJN) (Burkholderia phytofirmans), this protein is tRNA-cytidine(32) 2-sulfurtransferase.